The sequence spans 304 residues: N-acetylmuramic acid 6-phosphate etherase (304 aa).

Residue S2 is modified to Phosphoserine. The SIS domain occupies A59–K222. Catalysis depends on E87, which acts as the Proton donor. Residue E118 is part of the active site.

Belongs to the GCKR-like family. MurNAc-6-P etherase subfamily. In terms of assembly, homodimer.

The enzyme catalyses N-acetyl-D-muramate 6-phosphate + H2O = N-acetyl-D-glucosamine 6-phosphate + (R)-lactate. It functions in the pathway amino-sugar metabolism; N-acetylmuramate degradation. Specifically catalyzes the cleavage of the D-lactyl ether substituent of MurNAc 6-phosphate, producing GlcNAc 6-phosphate and D-lactate. This Bacillus subtilis (strain 168) protein is N-acetylmuramic acid 6-phosphate etherase.